A 340-amino-acid chain; its full sequence is Phenylalanine--tRNA ligase alpha subunit (340 aa).

Glu-254 contacts Mg(2+).

It belongs to the class-II aminoacyl-tRNA synthetase family. Phe-tRNA synthetase alpha subunit type 1 subfamily. Tetramer of two alpha and two beta subunits. It depends on Mg(2+) as a cofactor.

The protein resides in the cytoplasm. The enzyme catalyses tRNA(Phe) + L-phenylalanine + ATP = L-phenylalanyl-tRNA(Phe) + AMP + diphosphate + H(+). This Caldicellulosiruptor saccharolyticus (strain ATCC 43494 / DSM 8903 / Tp8T 6331) protein is Phenylalanine--tRNA ligase alpha subunit.